The following is a 405-amino-acid chain: Tyrosine--tRNA ligase (405 aa).

Residue tyrosine 35 participates in L-tyrosine binding. A 'HIGH' region motif is present at residues 40 to 49 (TTSSSLHIGH). 2 residues coordinate L-tyrosine: tyrosine 166 and glutamine 170. A 'KMSKS' region motif is present at residues 226–230 (KMGKS). Lysine 229 provides a ligand contact to ATP. Residues 340 to 404 (ILLIDLMLDS…VGKKKFLRIV (65 aa)) form the S4 RNA-binding domain.

Belongs to the class-I aminoacyl-tRNA synthetase family. TyrS type 1 subfamily. As to quaternary structure, homodimer.

Its subcellular location is the cytoplasm. The enzyme catalyses tRNA(Tyr) + L-tyrosine + ATP = L-tyrosyl-tRNA(Tyr) + AMP + diphosphate + H(+). Catalyzes the attachment of tyrosine to tRNA(Tyr) in a two-step reaction: tyrosine is first activated by ATP to form Tyr-AMP and then transferred to the acceptor end of tRNA(Tyr). This Borrelia garinii subsp. bavariensis (strain ATCC BAA-2496 / DSM 23469 / PBi) (Borreliella bavariensis) protein is Tyrosine--tRNA ligase.